Reading from the N-terminus, the 1505-residue chain is Phosphatidylinositol 3-kinase C2 domain-containing subunit gamma (1505 aa).

A disordered region spans residues 1–32 (MAYNWQTEPNRAEPQEGGHDHQQCHHADQHLS). Residues 10 to 31 (NRAEPQEGGHDHQQCHHADQHL) are compositionally biased toward basic and acidic residues. One can recognise a PI3K-RBD domain in the interval 278-370 (PSRLFADTQF…IQLHLQRSRD (93 aa)). Positions 540-688 (LHSHLSFTVC…TPLTLQIDFP (149 aa)) constitute a C2 PI3K-type domain. The PIK helical domain occupies 703 to 879 (RTDHQEPPRE…QELLAALQFC (177 aa)). The region spanning 948-1226 (DRDACSYFTS…KIKQSLECFP (279 aa)) is the PI3K/PI4K catalytic domain. The G-loop stretch occupies residues 954 to 960 (YFTSNAL). The interval 1090–1098 (GVCDRHNDN) is catalytic loop. The activation loop stretch occupies residues 1109 to 1135 (HIDFGKFLGHAQTFGGIKRDRAPFIFT). Residues 1259–1371 (LNKTRTIQRV…SFFLSEHIQQ (113 aa)) enclose the PX domain. In terms of domain architecture, C2 spans 1384–1505 (HSPDKSPQVQ…KWYPLGNSII (122 aa)).

Belongs to the PI3/PI4-kinase family. Predominantly expressed in normal liver. High levels also found in regenerating liver. Very low levels found in heart and testis.

Its subcellular location is the membrane. The enzyme catalyses a 1,2-diacyl-sn-glycero-3-phospho-(1D-myo-inositol) + ATP = a 1,2-diacyl-sn-glycero-3-phospho-(1D-myo-inositol-3-phosphate) + ADP + H(+). It carries out the reaction a 1,2-diacyl-sn-glycero-3-phospho-(1D-myo-inositol 4-phosphate) + ATP = a 1,2-diacyl-sn-glycero-3-phospho-(1D-myo-inositol-3,4-bisphosphate) + ADP + H(+). Generates phosphatidylinositol 3-phosphate (PtdIns3P) and phosphatidylinositol 3,4-bisphosphate (PtdIns(3,4)P2) that act as second messengers. May play a role in SDF1A-stimulated chemotaxis. The sequence is that of Phosphatidylinositol 3-kinase C2 domain-containing subunit gamma (Pik3c2g) from Rattus norvegicus (Rat).